The sequence spans 359 residues: Peptide chain release factor 1 (359 aa).

Gln236 carries the post-translational modification N5-methylglutamine.

The protein belongs to the prokaryotic/mitochondrial release factor family. In terms of processing, methylated by PrmC. Methylation increases the termination efficiency of RF1.

The protein resides in the cytoplasm. Peptide chain release factor 1 directs the termination of translation in response to the peptide chain termination codons UAG and UAA. The polypeptide is Peptide chain release factor 1 (Streptococcus agalactiae serotype V (strain ATCC BAA-611 / 2603 V/R)).